The primary structure comprises 197 residues: Probable UbiX-like flavin prenyltransferase (197 aa).

FMN contacts are provided by residues Gly-9–Thr-11, Ser-36, Ser-87–Thr-90, and Arg-122.

It belongs to the UbiX/PAD1 family. YclB subfamily. In terms of assembly, homododecamer.

The enzyme catalyses dimethylallyl phosphate + FMNH2 = prenylated FMNH2 + phosphate. Flavin prenyltransferase that catalyzes the synthesis of the prenylated FMN cofactor (prenyl-FMN) for phenolic acid decarboxylase C. Involved in the decarboxylation and detoxification of phenolic derivatives under both aerobic and anaerobic conditions. The protein is Probable UbiX-like flavin prenyltransferase (ecdB) of Escherichia coli.